Reading from the N-terminus, the 336-residue chain is Zinc-type alcohol dehydrogenase-like protein SE_1777 (336 aa).

Belongs to the zinc-containing alcohol dehydrogenase family. Quinone oxidoreductase subfamily.

This is Zinc-type alcohol dehydrogenase-like protein SE_1777 from Staphylococcus epidermidis (strain ATCC 12228 / FDA PCI 1200).